Consider the following 530-residue polypeptide: Bifunctional purine biosynthesis protein PurH (530 aa).

The MGS-like domain maps to Met-1–Val-148.

Belongs to the PurH family.

The catalysed reaction is (6R)-10-formyltetrahydrofolate + 5-amino-1-(5-phospho-beta-D-ribosyl)imidazole-4-carboxamide = 5-formamido-1-(5-phospho-D-ribosyl)imidazole-4-carboxamide + (6S)-5,6,7,8-tetrahydrofolate. It carries out the reaction IMP + H2O = 5-formamido-1-(5-phospho-D-ribosyl)imidazole-4-carboxamide. The protein operates within purine metabolism; IMP biosynthesis via de novo pathway; 5-formamido-1-(5-phospho-D-ribosyl)imidazole-4-carboxamide from 5-amino-1-(5-phospho-D-ribosyl)imidazole-4-carboxamide (10-formyl THF route): step 1/1. It functions in the pathway purine metabolism; IMP biosynthesis via de novo pathway; IMP from 5-formamido-1-(5-phospho-D-ribosyl)imidazole-4-carboxamide: step 1/1. The chain is Bifunctional purine biosynthesis protein PurH from Vibrio atlanticus (strain LGP32) (Vibrio splendidus (strain Mel32)).